The sequence spans 498 residues: Protein DETOXIFICATION 30 (498 aa).

The next 12 membrane-spanning stretches (helical) occupy residues 64–86, 91–111, 136–156, 161–181, 197–217, 227–247, 277–297, 302–322, 349–369, 393–413, 419–439, and 447–467; these read YSLG…AAVS, VIAG…ETLC, VTAV…AFIG, ISSA…AYAV, VMAA…WFVI, LAVV…VYIF, AVML…AGYL, ISVA…MIAI, LVAV…LLIF, ILAV…VAVG, VVAY…GLLL, and VMGI…VLTW.

Belongs to the multi antimicrobial extrusion (MATE) (TC 2.A.66.1) family.

It is found in the membrane. The chain is Protein DETOXIFICATION 30 from Arabidopsis thaliana (Mouse-ear cress).